A 293-amino-acid polypeptide reads, in one-letter code: Movement protein BC1 (293 aa).

The tract at residues 207-228 is disordered; it reads SWASRSTIGPSPSYAGSDQGDA. The span at 209–222 shows a compositional bias: polar residues; the sequence is ASRSTIGPSPSYAG.

Belongs to the begomovirus movement protein BC1 family. In terms of assembly, binds to dimeric supercoiled plasmid DNA. In terms of processing, phosphorylated.

It localises to the host cell membrane. Its subcellular location is the host microsome membrane. The protein resides in the host endoplasmic reticulum membrane. Functionally, movement protein involved in the cell-to-cell and systemic transport of viral genomic DNA. Begomoviruses use 2 proteins to transport their DNA from cell to cell. The nuclear shuttle protein (NSP) shuttles it between nucleus and cytoplasm and the movement protein (MP) probably transports the DNA-NSP complex to the cell periphery and facilitates further movement across the cell wall. This Tomato golden mosaic virus (strain Yellow vein) (TGMV) protein is Movement protein BC1.